The following is a 53-amino-acid chain: UPF0391 membrane protein Acid_3618 (53 aa).

2 helical membrane passes run 6–26 (LVFL…LAGA) and 28–48 (VGIA…AFLM).

The protein belongs to the UPF0391 family.

The protein resides in the cell membrane. The chain is UPF0391 membrane protein Acid_3618 from Solibacter usitatus (strain Ellin6076).